A 283-amino-acid polypeptide reads, in one-letter code: Heavy metal-associated isoprenylated plant protein 3 (283 aa).

The segment covering 1–22 has biased composition (basic and acidic residues); that stretch reads MGEKKNEGDNKKKGGDNKKKNE. The interval 1 to 26 is disordered; it reads MGEKKNEGDNKKKGGDNKKKNETPSI. HMA domains lie at 25–88 and 132–195; these read SITV…KKKV and VTTA…KRAV. Zn(2+) is bound by residues C36 and C39. Positions 82-129 are enriched in basic and acidic residues; that stretch reads EKTKKKVDLVSPQPKKEKEKENKNKNDEDKKKSEEKKKPDNNDKKPKE. The interval 82–131 is disordered; that stretch reads EKTKKKVDLVSPQPKKEKEKENKNKNDEDKKKSEEKKKPDNNDKKPKETP. The Zn(2+) site is built by C143 and C146. A compositionally biased stretch (basic and acidic residues) spans 198–230; that stretch reads VPPKKEKDKENGNENGEKKKGGGGDGGGKEKTG. Positions 198 to 238 are disordered; that stretch reads VPPKKEKDKENGNENGEKKKGGGGDGGGKEKTGNKGGGEGV. Position 280 is a cysteine methyl ester (C280). Residue C280 is the site of S-farnesyl cysteine attachment. Residues 281–283 constitute a propeptide, removed in mature form; it reads VVM.

This sequence belongs to the HIPP family.

Its subcellular location is the nucleus. The protein resides in the nucleolus. It localises to the cytoplasm. In terms of biological role, heavy-metal-binding protein. Binds high amounts of zinc. May act as an upstream regulator of the salicylate-dependent pathogen response. Involved in abiotic stress responses, and seed and flower development. This is Heavy metal-associated isoprenylated plant protein 3 from Arabidopsis thaliana (Mouse-ear cress).